A 162-amino-acid polypeptide reads, in one-letter code: Ribosome-binding factor A (162 aa).

Residues 123–162 (VARVAAGASPAGDPDPYKEPRVEDADDAEVDEPSRSRQAD) are disordered. Residues 125–136 (RVAAGASPAGDP) are compositionally biased toward low complexity.

It belongs to the RbfA family. As to quaternary structure, monomer. Binds 30S ribosomal subunits, but not 50S ribosomal subunits or 70S ribosomes.

It localises to the cytoplasm. In terms of biological role, one of several proteins that assist in the late maturation steps of the functional core of the 30S ribosomal subunit. Associates with free 30S ribosomal subunits (but not with 30S subunits that are part of 70S ribosomes or polysomes). Required for efficient processing of 16S rRNA. May interact with the 5'-terminal helix region of 16S rRNA. The protein is Ribosome-binding factor A of Rhodococcus opacus (strain B4).